Reading from the N-terminus, the 211-residue chain is Protein-L-isoaspartate O-methyltransferase (211 aa).

Residue Ser-60 is part of the active site.

Belongs to the methyltransferase superfamily. L-isoaspartyl/D-aspartyl protein methyltransferase family.

The protein resides in the cytoplasm. It carries out the reaction [protein]-L-isoaspartate + S-adenosyl-L-methionine = [protein]-L-isoaspartate alpha-methyl ester + S-adenosyl-L-homocysteine. Functionally, catalyzes the methyl esterification of L-isoaspartyl residues in peptides and proteins that result from spontaneous decomposition of normal L-aspartyl and L-asparaginyl residues. It plays a role in the repair and/or degradation of damaged proteins. This Pseudomonas savastanoi pv. phaseolicola (strain 1448A / Race 6) (Pseudomonas syringae pv. phaseolicola (strain 1448A / Race 6)) protein is Protein-L-isoaspartate O-methyltransferase.